Here is a 99-residue protein sequence, read N- to C-terminus: Indole-3-acetic acid-induced protein ARG2 (99 aa).

Residues 40-62 are disordered; the sequence is RGGASIGGNMVPKSGEEKVRGGE. Positions 53-62 are enriched in basic and acidic residues; the sequence is SGEEKVRGGE.

The protein is Indole-3-acetic acid-induced protein ARG2 (ARG2) of Vigna radiata var. radiata (Mung bean).